Consider the following 333-residue polypeptide: Glycerol-3-phosphate dehydrogenase [NAD(P)+] (333 aa).

NADPH contacts are provided by serine 10, tryptophan 11, histidine 31, arginine 32, and lysine 105. The sn-glycerol 3-phosphate site is built by lysine 105, glycine 136, and serine 138. NADPH is bound at residue alanine 140. Residues lysine 191, aspartate 244, serine 254, arginine 255, and asparagine 256 each coordinate sn-glycerol 3-phosphate. Lysine 191 (proton acceptor) is an active-site residue. Residue arginine 255 participates in NADPH binding. Positions 279 and 281 each coordinate NADPH.

This sequence belongs to the NAD-dependent glycerol-3-phosphate dehydrogenase family.

The protein localises to the cytoplasm. The catalysed reaction is sn-glycerol 3-phosphate + NAD(+) = dihydroxyacetone phosphate + NADH + H(+). The enzyme catalyses sn-glycerol 3-phosphate + NADP(+) = dihydroxyacetone phosphate + NADPH + H(+). The protein operates within membrane lipid metabolism; glycerophospholipid metabolism. Catalyzes the reduction of the glycolytic intermediate dihydroxyacetone phosphate (DHAP) to sn-glycerol 3-phosphate (G3P), the key precursor for phospholipid synthesis. The protein is Glycerol-3-phosphate dehydrogenase [NAD(P)+] of Chlorobium luteolum (strain DSM 273 / BCRC 81028 / 2530) (Pelodictyon luteolum).